The chain runs to 319 residues: Large ribosomal subunit protein uL10 (319 aa).

The interval 289–319 (EQKSAAPAAKEEAPKEDSEESDEDMGFGLFD) is disordered.

It belongs to the universal ribosomal protein uL10 family. In terms of assembly, P0 forms a pentameric complex by interaction with dimers of P1 and P2. In terms of processing, phosphorylated.

It localises to the nucleus. It is found in the cytoplasm. In terms of biological role, ribosomal protein P0 is the functional equivalent of E.coli protein L10. The chain is Large ribosomal subunit protein uL10 (rplp0) from Danio rerio (Zebrafish).